Reading from the N-terminus, the 103-residue chain is Co-chaperonin GroES (103 aa).

The protein belongs to the GroES chaperonin family. Heptamer of 7 subunits arranged in a ring. Interacts with the chaperonin GroEL.

It is found in the plastid. It localises to the cyanelle. Together with the chaperonin GroEL, plays an essential role in assisting protein folding. The GroEL-GroES system forms a nano-cage that allows encapsulation of the non-native substrate proteins and provides a physical environment optimized to promote and accelerate protein folding. GroES binds to the apical surface of the GroEL ring, thereby capping the opening of the GroEL channel. This chain is Co-chaperonin GroES, found in Cyanophora paradoxa.